Reading from the N-terminus, the 213-residue chain is Ribosomal RNA small subunit methyltransferase G (213 aa).

S-adenosyl-L-methionine contacts are provided by residues Gly75, Phe80, 128-129, and Arg144; that span reads IE.

This sequence belongs to the methyltransferase superfamily. RNA methyltransferase RsmG family.

Its subcellular location is the cytoplasm. It carries out the reaction guanosine(527) in 16S rRNA + S-adenosyl-L-methionine = N(7)-methylguanosine(527) in 16S rRNA + S-adenosyl-L-homocysteine. Specifically methylates the N7 position of guanine in position 527 of 16S rRNA. The protein is Ribosomal RNA small subunit methyltransferase G of Brucella anthropi (strain ATCC 49188 / DSM 6882 / CCUG 24695 / JCM 21032 / LMG 3331 / NBRC 15819 / NCTC 12168 / Alc 37) (Ochrobactrum anthropi).